The following is a 230-amino-acid chain: Endonuclease NucS (230 aa).

The protein belongs to the NucS endonuclease family.

The protein localises to the cytoplasm. Its function is as follows. Cleaves both 3' and 5' ssDNA extremities of branched DNA structures. The chain is Endonuclease NucS from Corynebacterium aurimucosum (strain ATCC 700975 / DSM 44827 / CIP 107346 / CN-1) (Corynebacterium nigricans).